The primary structure comprises 260 residues: Acyl-[acyl-carrier-protein]--UDP-N-acetylglucosamine O-acyltransferase (260 aa).

Belongs to the transferase hexapeptide repeat family. LpxA subfamily. In terms of assembly, homotrimer.

Its subcellular location is the cytoplasm. The enzyme catalyses a (3R)-hydroxyacyl-[ACP] + UDP-N-acetyl-alpha-D-glucosamine = a UDP-3-O-[(3R)-3-hydroxyacyl]-N-acetyl-alpha-D-glucosamine + holo-[ACP]. It participates in glycolipid biosynthesis; lipid IV(A) biosynthesis; lipid IV(A) from (3R)-3-hydroxytetradecanoyl-[acyl-carrier-protein] and UDP-N-acetyl-alpha-D-glucosamine: step 1/6. In terms of biological role, involved in the biosynthesis of lipid A, a phosphorylated glycolipid that anchors the lipopolysaccharide to the outer membrane of the cell. This is Acyl-[acyl-carrier-protein]--UDP-N-acetylglucosamine O-acyltransferase from Aliarcobacter butzleri (strain RM4018) (Arcobacter butzleri).